A 147-amino-acid polypeptide reads, in one-letter code: Putative protein CLUHP3 (147 aa).

A disordered region spans residues 14–47 (KEPEGGRRRLSHPGNMGWMRPSQETTPPDRSHHS).

This is Putative protein CLUHP3 (CLUHP3) from Homo sapiens (Human).